The sequence spans 313 residues: Dioxygenase swnH2 (313 aa).

Fe cation is bound by residues histidine 155, aspartate 157, and histidine 232.

This sequence belongs to the PhyH family. Homodimer. Fe cation serves as cofactor.

Its pathway is mycotoxin biosynthesis. Functionally, aminotransferase; part of the gene cluster that mediates the biosynthesis of swainsonine (SW), a cytotoxic fungal alkaloid and a potential cancer therapy drug. Swainsonine production occurs via a multibranched pathway and is dispensable for fungal colonization of plants and infection of insect hosts. The first step of swainsonine biosynthesis is the production of the precursor pipecolic acid (PA) via conversion of L-lysine (Lys) to 1-piperideine-6-carboxylate (P6C) by the aminotransferase swnA, the latter being further reduced to PA by the reductase swnR. The PKS-NRPS hybrid synthetase swnK uptakes and condensates PA and malonyl-CoA with and without skipping of the ketoreductase (KR) domain in order to produce 3 intermediates, 1-oxoindolizidine, (1S)-1-hydroxyindolizin, and (1R)-1-hydroxyindolizine; with the transisomer (1S)-1-hydroxyindolizin being predominant. The terminal thioester reductase (TE) domain of swnK is involved in reduction of the thioester bond to release the intermediate aldehydes. The oxidoreductase swnN could contribute to the reduction of 1-oxoindolizidine to (1S)-1-hydroxyindolizin and (1R)-1-hydroxyindolizine, contributing to the major route of SW production. The dioxygenase swnH2 would be responsible for the oxidization of (1R)-1-hydroxyindolizine into (1R,2S)-1,2-dihydroxyindolizine and of (1S)-1-hydroxyindolizin to yield both (1R,2S)-1,2-dihydroxyindolizine and (1S,2S)-1,2-dihydroxyindolizine. The dioxygenase swnH1 then performs the conversion of the 1,2-dihydroxyindolizine epimers to SW. This is Dioxygenase swnH2 from Arthroderma benhamiae (strain ATCC MYA-4681 / CBS 112371) (Trichophyton mentagrophytes).